Here is a 148-residue protein sequence, read N- to C-terminus: Glutamyl-tRNA(Gln) amidotransferase subunit C, mitochondrial (148 aa).

Belongs to the GatC family. In terms of assembly, subunit of the heterotrimeric GatCAB amidotransferase (AdT) complex, composed of A, B and C subunits.

It is found in the mitochondrion. The catalysed reaction is L-glutamyl-tRNA(Gln) + L-glutamine + ATP + H2O = L-glutaminyl-tRNA(Gln) + L-glutamate + ADP + phosphate + H(+). In terms of biological role, allows the formation of correctly charged Gln-tRNA(Gln) through the transamidation of misacylated Glu-tRNA(Gln) in the mitochondria. The reaction takes place in the presence of glutamine and ATP through an activated gamma-phospho-Glu-tRNA(Gln). The sequence is that of Glutamyl-tRNA(Gln) amidotransferase subunit C, mitochondrial from Drosophila yakuba (Fruit fly).